Here is a 151-residue protein sequence, read N- to C-terminus: UPF0735 ACT domain-containing protein SERP1207 (151 aa).

Positions 74-149 (TLILYVNDIV…HVTKVDLISM (76 aa)) constitute an ACT domain.

It belongs to the UPF0735 family.

The chain is UPF0735 ACT domain-containing protein SERP1207 from Staphylococcus epidermidis (strain ATCC 35984 / DSM 28319 / BCRC 17069 / CCUG 31568 / BM 3577 / RP62A).